A 117-amino-acid chain; its full sequence is uncharacterized protein (117 aa).

The signal sequence occupies residues 1–18; that stretch reads MKFFWVSSLLGLLGLSTA. N86 carries N-linked (GlcNAc...) asparagine glycosylation.

This is an uncharacterized protein from Schizosaccharomyces pombe (strain 972 / ATCC 24843) (Fission yeast).